We begin with the raw amino-acid sequence, 91 residues long: Acylphosphatase (91 aa).

Residues 3 to 90 (RVLIRVKGKV…EIYLDFSITQ (88 aa)) form the Acylphosphatase-like domain. Active-site residues include R18 and N36.

Belongs to the acylphosphatase family.

It carries out the reaction an acyl phosphate + H2O = a carboxylate + phosphate + H(+). The sequence is that of Acylphosphatase (acyP) from Shewanella amazonensis (strain ATCC BAA-1098 / SB2B).